Consider the following 680-residue polypeptide: MGRIKKKGTAGQAKNFITRTQAVRKLQISLPDFRKLCIWKGIYPREPRNKKKASKSSTHSTTFYYTKDIQWLLHEKIVDAFREQKALEKKISKALGRGDAHDAARLERNASRPEKTGKTKYNLDHIIRERYPTFIDALRDLDDCLSMLFLFANLPSTSTVPAKMIARCEKLCLEFEHYLIVSNSLRKSFLSIKGIYYQATIQGQDILWLVPYRFNQRVTGDVDFRIMGTFVEFYQTLLGFVNFRLYTSVGLVYPPKFDKARDDQDAGLGAFSLEGNGIGAIEQPKQITNGDASKPDPKLQAEIDKLMLQLNAPEKEAEETSKTSPDGEEEEQATETIDKFEPAAPGGDILMQPSYSATDPSTLFSKFTFFLSRETPRQSLEFILRAFGCKRIGWDAVLGEGAFTHNESDPSITHQVVDRPPMQVQPEEEEEIKEDNQTAQRLRPGARIPGRIYIQPQWIWDCINDEELKRPDLYAPGAQLPPHLSPFVKKVRGQYDPSAPLQDQEREDEELEMDSGSEDEADVSDDETAVKKQDPLTAMDVDETAEGMDVAGSDDESDEAPEKADESFGGFSEAEESEDEGETAALRRQRELEAELSGVALQEKEVDPRVKAKTDAKKKAAKKAKEEDEELERSKMMMSRKKRKILEKMVYSNKKKDAEAEALRAKRRKIEKSGKAAPRE.

A disordered region spans residues 312–351 (APEKEAEETSKTSPDGEEEEQATETIDKFEPAAPGGDILM). The BRCT domain occupies 359 to 476 (DPSTLFSKFT…ELKRPDLYAP (118 aa)). 2 disordered regions span residues 494–642 (QYDP…SRKK) and 654–680 (KKKD…APRE). Acidic residues-rich tracts occupy residues 505–527 (ERED…SDDE), 540–559 (DVDE…ESDE), and 573–582 (EAEESEDEGE). 3 stretches are compositionally biased toward basic and acidic residues: residues 602-626 (QEKE…KAKE), 654-664 (KKKDAEAEALR), and 671-680 (EKSGKAAPRE). The stretch at 611–673 (KAKTDAKKKA…RAKRRKIEKS (63 aa)) forms a coiled coil.

The protein belongs to the pescadillo family. As to quaternary structure, component of the NOP7 complex, composed of erb1, nop7 and ytm1. The complex is held together by erb1, which interacts with nop7 via its N-terminal domain and with ytm1 via a high-affinity interaction between the seven-bladed beta-propeller domains of the 2 proteins. The NOP7 complex associates with the 66S pre-ribosome.

It is found in the nucleus. It localises to the nucleolus. The protein resides in the nucleoplasm. In terms of biological role, component of the NOP7 complex, which is required for maturation of the 25S and 5.8S ribosomal RNAs and formation of the 60S ribosome. The polypeptide is Pescadillo homolog (nop7) (Sclerotinia sclerotiorum (strain ATCC 18683 / 1980 / Ss-1) (White mold)).